The sequence spans 358 residues: MAERRIIHIDMDYFFAQVEMRDNPTLKGKPVIVGGKASTRGVVSTASYEARKYGVHSAMPMSQAHKLCPNGYYVRARFDAYREASAVIMSIFKSYTDIVEPMSLDEAYLDITHLVRPDLSASKIATFIRRDIFEQTGLTSSAGVSYNKFLAKLASGMNKPNGMKVIDYNNVNDILMNLDIGDFPGVGKASKKVMHNHDIYTGKDLYDKTEFELIRWFGKRGRGLYLKARGIDHSEVKATRVRKSVGTERTFSTDVNDDEEILQKIWELSGKTAERLSKLQKSGSTVTVKLKTYQYETFSKQRSLREAVSRDIDIYNVAYDLYNDLKDPDVPIRLIGVTVGNLEQSRYENMTIYDFIER.

Residues 6–187 form the UmuC domain; sequence IIHIDMDYFF…LDIGDFPGVG (182 aa). Mg(2+) is bound by residues Asp-10 and Asp-105. Residue Glu-106 is part of the active site.

This sequence belongs to the DNA polymerase type-Y family. As to quaternary structure, monomer. Mg(2+) is required as a cofactor.

It is found in the cytoplasm. It catalyses the reaction DNA(n) + a 2'-deoxyribonucleoside 5'-triphosphate = DNA(n+1) + diphosphate. Its function is as follows. Poorly processive, error-prone DNA polymerase involved in untargeted mutagenesis. Copies undamaged DNA at stalled replication forks, which arise in vivo from mismatched or misaligned primer ends. These misaligned primers can be extended by PolIV. Exhibits no 3'-5' exonuclease (proofreading) activity. May be involved in translesional synthesis, in conjunction with the beta clamp from PolIII. The sequence is that of DNA polymerase IV from Staphylococcus haemolyticus (strain JCSC1435).